The chain runs to 243 residues: Small ribosomal subunit protein uS3 (243 aa).

Residues 39–110 form the KH type-2 domain; sequence IRKFIHKKYG…QVRINVVEVE (72 aa). Residues 217–243 are disordered; that stretch reads QQLPVGATPRRRAGRRPQQFEDRSNEG. A compositionally biased stretch (basic and acidic residues) spans 234–243; the sequence is QQFEDRSNEG.

Belongs to the universal ribosomal protein uS3 family. Part of the 30S ribosomal subunit. Forms a tight complex with proteins S10 and S14.

Functionally, binds the lower part of the 30S subunit head. Binds mRNA in the 70S ribosome, positioning it for translation. This chain is Small ribosomal subunit protein uS3, found in Synechococcus sp. (strain WH7803).